A 289-amino-acid chain; its full sequence is Acetyl-coenzyme A carboxylase carboxyl transferase subunit beta (289 aa).

One can recognise a CoA carboxyltransferase N-terminal domain in the interval 24–289 (LWIKCPESGE…NSPRRAPIPA (266 aa)).

Belongs to the AccD/PCCB family. Acetyl-CoA carboxylase is a heterohexamer composed of biotin carboxyl carrier protein (AccB), biotin carboxylase (AccC) and two subunits each of ACCase subunit alpha (AccA) and ACCase subunit beta (AccD).

The protein localises to the cytoplasm. The catalysed reaction is N(6)-carboxybiotinyl-L-lysyl-[protein] + acetyl-CoA = N(6)-biotinyl-L-lysyl-[protein] + malonyl-CoA. Its pathway is lipid metabolism; malonyl-CoA biosynthesis; malonyl-CoA from acetyl-CoA: step 1/1. Its function is as follows. Component of the acetyl coenzyme A carboxylase (ACC) complex. Biotin carboxylase (BC) catalyzes the carboxylation of biotin on its carrier protein (BCCP) and then the CO(2) group is transferred by the transcarboxylase to acetyl-CoA to form malonyl-CoA. In Beijerinckia indica subsp. indica (strain ATCC 9039 / DSM 1715 / NCIMB 8712), this protein is Acetyl-coenzyme A carboxylase carboxyl transferase subunit beta.